The chain runs to 100 residues: Small ribosomal subunit protein uS14c (100 aa).

Belongs to the universal ribosomal protein uS14 family. In terms of assembly, part of the 30S ribosomal subunit.

Its subcellular location is the plastid. It localises to the chloroplast. Functionally, binds 16S rRNA, required for the assembly of 30S particles. The sequence is that of Small ribosomal subunit protein uS14c from Porphyra purpurea (Red seaweed).